Consider the following 918-residue polypeptide: Non-lysosomal glucosylceramidase (918 aa).

The segment at 886–918 (HKKSRRPSVTQGTGLSTQPECGPKRSLANLNSE) is disordered. Residues 892 to 904 (PSVTQGTGLSTQP) are compositionally biased toward polar residues. The residue at position 893 (S893) is a Phosphoserine.

This sequence belongs to the non-lysosomal glucosylceramidase family. As to expression, widely expressed at low level. Highly expressed in testis and brain. Ubiquitously expressed in the brain (at protein level). Expressed by Sertoli cells (at protein level).

The protein resides in the endoplasmic reticulum membrane. The protein localises to the golgi apparatus membrane. The enzyme catalyses a beta-D-glucosyl-(1&lt;-&gt;1')-N-acylsphing-4-enine + H2O = an N-acylsphing-4-enine + D-glucose. The catalysed reaction is a beta-D-galactosyl-(1&lt;-&gt;1')-N-acylsphing-4-enine + H2O = an N-acylsphing-4-enine + D-galactose. It carries out the reaction beta-D-glucosyl-(1-&gt;3)-O-lithocholate + H2O = lithocholate + D-glucose. It catalyses the reaction beta-D-glucosyl-(1-&gt;3)-O-chenodeoxycholate + H2O = chenodeoxycholate + D-glucose. The enzyme catalyses a di-trans,poly-cis-dolichyl beta-D-glucosyl phosphate + chenodeoxycholate = beta-D-glucosyl-(1-&gt;3)-O-chenodeoxycholate + a di-trans,poly-cis-dolichyl phosphate + H(+). The catalysed reaction is octyl beta-D-glucose + chenodeoxycholate = beta-D-glucosyl-(1-&gt;3)-O-chenodeoxycholate + octan-1-ol. It carries out the reaction cholesteryl 3-beta-D-glucoside + H2O = cholesterol + D-glucose. It catalyses the reaction a beta-D-glucosyl-(1&lt;-&gt;1')-N-acylsphing-4-enine + cholesterol = cholesteryl 3-beta-D-glucoside + an N-acylsphing-4-enine. The enzyme catalyses beta-D-glucosyl-N-(9Z-octadecenoyl)-sphing-4E-enine + cholesterol = N-(9Z-octadecenoyl)-sphing-4-enine + cholesteryl 3-beta-D-glucoside. The catalysed reaction is a beta-D-galactosyl-(1&lt;-&gt;1')-N-acylsphing-4-enine + cholesterol = cholesteryl 3-beta-D-galactoside + an N-acylsphing-4-enine. It carries out the reaction 1-(beta-D-galactosyl)-N-dodecanoylsphing-4-enine + cholesterol = cholesteryl 3-beta-D-galactoside + N-dodecanoylsphing-4-enine. It functions in the pathway lipid metabolism; sphingolipid metabolism. The protein operates within steroid metabolism; cholesterol metabolism. Enzymatic activity is dependent on membrane association and requires the presence of lipids. Inhibited by N-(adamantanemethyloxypentyl)-deoxynojirimycin/AMP-DNM. Inhibited by its product sphingosine/N-acylsphing-4-enine in a feedback loop. Also inhibited by other non-acetylated sphingoid bases and their derivatives but not by sphingosine-1-phosphate and complex sphingolipids. Functionally, non-lysosomal glucosylceramidase that catalyzes the hydrolysis of glucosylceramides/GlcCers (such as beta-D-glucosyl-(1&lt;-&gt;1')-N-acylsphing-4-enine) to free glucose and ceramides (such as N-acylsphing-4-enine). GlcCers are membrane glycosphingolipids that have a wide intracellular distribution. They are the main precursors of more complex glycosphingolipids that play a role in cellular growth, differentiation, adhesion, signaling, cytoskeletal dynamics and membrane properties. Also involved in the transglucosylation of cholesterol, transferring glucose from GlcCer, thereby modifying its water solubility and biological properties. Under specific conditions, may catalyze the reverse reaction, transferring glucose from cholesteryl-3-beta-D-glucoside to ceramide (such as N-acylsphing-4-enine). May play a role in the metabolism of bile acids. Able to hydrolyze bile acid 3-O-glucosides as well as to produce bile acid-glucose conjugates thanks to a bile acid glucosyl transferase activity. Catalyzes the hydrolysis of galactosylceramides/GalCers (such as beta-D-galactosyl-(1&lt;-&gt;1')-N-acylsphing-4-enine), as well as galactosyl transfer between GalCers and cholesterol in vitro with lower activity compared with their activity against GlcCers. The sequence is that of Non-lysosomal glucosylceramidase from Mus musculus (Mouse).